The following is a 201-amino-acid chain: MQTSPLLEALTEALRCLPGVGPKSAQRMVFHLLQRDRSGGMRLAQALTRAMSEIGHCADCRTFTEQPVCTICANPRRQQSGQICVVESPADIHAIEQTGQFAGSYFVLMGHLSPLDGIGPDDIGLGRLQERLENESIEEVILATNPTVEGEATANYIAEMCAHYGVMASRIAHGVPVGGELEMVDGTTLSHSLAGRHPIKF.

The C4-type zinc finger occupies 57–72 (CADCRTFTEQPVCTIC). The region spanning 81 to 176 (GQICVVESPA…MASRIAHGVP (96 aa)) is the Toprim domain.

This sequence belongs to the RecR family.

Functionally, may play a role in DNA repair. It seems to be involved in an RecBC-independent recombinational process of DNA repair. It may act with RecF and RecO. This Sodalis glossinidius (strain morsitans) protein is Recombination protein RecR.